A 556-amino-acid chain; its full sequence is Potassium-transporting ATPase potassium-binding subunit (556 aa).

Helical transmembrane passes span 5–25 (LAGILFLASLVIALVAVHVPL), 65–85 (SVLAFSAVSLLFLFILQLVQG), 133–153 (GLAVQNFVSAAVGMAVAIALV), 176–196 (IRILLPISVIAAILLITGGAI), 249–269 (PTTWTNWIEIFLLLVIAFSLP), 283–303 (YAIVGVQAVLAVISWSATLFF), 377–397 (AGLYGILILAVITVFVAGLMV), 415–435 (LAATYFLVTPLIVLTGTAVAM), 483–503 (ALGLAMVFGRFLPIILALALA), and 526–546 (FVGMVAGVTLILVALTFLPML).

It belongs to the KdpA family. In terms of assembly, the system is composed of three essential subunits: KdpA, KdpB and KdpC.

The protein localises to the cell membrane. Part of the high-affinity ATP-driven potassium transport (or Kdp) system, which catalyzes the hydrolysis of ATP coupled with the electrogenic transport of potassium into the cytoplasm. This subunit binds the extracellular potassium ions and delivers the ions to the membrane domain of KdpB through an intramembrane tunnel. The polypeptide is Potassium-transporting ATPase potassium-binding subunit (Mycolicibacterium vanbaalenii (strain DSM 7251 / JCM 13017 / BCRC 16820 / KCTC 9966 / NRRL B-24157 / PYR-1) (Mycobacterium vanbaalenii)).